We begin with the raw amino-acid sequence, 563 residues long: GTPase Obg (563 aa).

In terms of domain architecture, Obg spans 2 to 168 (SDFVDRVTVH…RDVILELKSI (167 aa)). An OBG-type G domain is found at 169-349 (ADVALVGFPS…LNFALSALVH (181 aa)). GTP is bound by residues 175-182 (GFPSAGKS), 200-204 (FTTLV), 221-224 (DVPG), 301-304 (NKID), and 330-332 (STA). Ser-182 and Thr-202 together coordinate Mg(2+). The 87-residue stretch at 383-469 (DEGGSALEFT…ARMVEFDWDP (87 aa)) folds into the OCT domain. Disordered stretches follow at residues 478–509 (LDGS…ERRA) and 528–563 (ERKA…ETEE). Over residues 486–509 (RGKDLRLEEQDPRTHRRSNAERRA) the composition is skewed to basic and acidic residues.

The protein belongs to the TRAFAC class OBG-HflX-like GTPase superfamily. OBG GTPase family. As to quaternary structure, monomer. Requires Mg(2+) as cofactor.

The protein resides in the cytoplasm. In terms of biological role, an essential GTPase which binds GTP, GDP and possibly (p)ppGpp with moderate affinity, with high nucleotide exchange rates and a fairly low GTP hydrolysis rate. Plays a role in control of the cell cycle, stress response, ribosome biogenesis and in those bacteria that undergo differentiation, in morphogenesis control. The polypeptide is GTPase Obg (Bifidobacterium longum subsp. infantis (strain ATCC 15697 / DSM 20088 / JCM 1222 / NCTC 11817 / S12)).